We begin with the raw amino-acid sequence, 326 residues long: Nucleoporin Nup37 (326 aa).

WD repeat units lie at residues 70-117, 122-162, 164-203, and 294-325; these read HHGV…KNEY, GHSD…TAHF, LHSP…AILS, and GSVA…WVTE.

As to quaternary structure, component of the Nup107-160 subcomplex of the nuclear pore complex (NPC). The Nup107-160 subcomplex includes NUP160, NUP133, NUP107, NUP98, NUP85, NUP43, NUP37, SEH1 and SEC13.

The protein localises to the chromosome. It is found in the centromere. It localises to the kinetochore. Its subcellular location is the nucleus. The protein resides in the nuclear pore complex. In terms of biological role, component of the Nup107-160 subcomplex of the nuclear pore complex (NPC). The Nup107-160 subcomplex is required for the assembly of a functional NPC. The Nup107-160 subcomplex is also required for normal kinetochore microtubule attachment, mitotic progression and chromosome segregation. This Mus musculus (Mouse) protein is Nucleoporin Nup37 (Nup37).